We begin with the raw amino-acid sequence, 408 residues long: Serine/threonine transporter SstT (408 aa).

The next 10 membrane-spanning stretches (helical) occupy residues Met-15–Trp-35, Phe-49–Ile-69, Leu-85–Phe-105, Ala-142–Leu-162, Pro-192–Leu-212, Leu-218–Phe-238, Tyr-246–Ala-268, Ile-289–Ile-309, Leu-317–Ala-337, and Thr-362–Thr-382.

It belongs to the dicarboxylate/amino acid:cation symporter (DAACS) (TC 2.A.23) family.

The protein resides in the cell inner membrane. It carries out the reaction L-serine(in) + Na(+)(in) = L-serine(out) + Na(+)(out). It catalyses the reaction L-threonine(in) + Na(+)(in) = L-threonine(out) + Na(+)(out). Its function is as follows. Involved in the import of serine and threonine into the cell, with the concomitant import of sodium (symport system). This is Serine/threonine transporter SstT from Marinobacter nauticus (strain ATCC 700491 / DSM 11845 / VT8) (Marinobacter aquaeolei).